The sequence spans 201 residues: MCAARLAAAAAQSVYAFSARPLTGGEPVSLGSLRGKILLIENVASLUGTTVRDYTQMNELQRRLGPRGLVVLGFPCNQFGHQENAKNEEILNSLKYVRPGGGFEPNFMLFEKCEVNGAGAHPLFAFLREALPAPSDDATALMTDPKLITWSPVCRNDVAWNFEKFLVGPDGVPLRRYSRRFQTIDIEPDIEALLSQGPSCA.

Phosphoserine is present on Ser-32. Sec-47 is an active-site residue. Sec-47 is a non-standard amino acid (selenocysteine). Lys-86, Lys-112, and Lys-146 each carry N6-acetyllysine; alternate. Lys-86, Lys-112, and Lys-146 each carry N6-succinyllysine; alternate. A phosphoserine mark is found at Ser-195 and Ser-199.

This sequence belongs to the glutathione peroxidase family. As to quaternary structure, homotetramer. Interacts with MIEN1. Post-translationally, during periods of oxidative stress, Sec-47 may react with a superoxide radical, irreversibly lose hydroselenide and be converted to dehydroalanine.

The protein resides in the cytoplasm. It catalyses the reaction 2 glutathione + H2O2 = glutathione disulfide + 2 H2O. The catalysed reaction is (12S)-hydroperoxy-(5Z,8Z,10E,14Z)-eicosatetraenoate + 2 glutathione = (12S)-hydroxy-(5Z,8Z,10E,14Z)-eicosatetraenoate + glutathione disulfide + H2O. Functionally, protects the hemoglobin in erythrocytes from oxidative breakdown. In platelets, plays a crucial role of glutathione peroxidase in the arachidonic acid metabolism. In Hylobates lar (Lar gibbon), this protein is Glutathione peroxidase 1 (GPX1).